Here is an 88-residue protein sequence, read N- to C-terminus: Small ribosomal subunit protein bS20 (88 aa).

Belongs to the bacterial ribosomal protein bS20 family.

Binds directly to 16S ribosomal RNA. In Bacillus licheniformis (strain ATCC 14580 / DSM 13 / JCM 2505 / CCUG 7422 / NBRC 12200 / NCIMB 9375 / NCTC 10341 / NRRL NRS-1264 / Gibson 46), this protein is Small ribosomal subunit protein bS20.